The following is a 438-amino-acid chain: Phosphoribosylamine--glycine ligase (438 aa).

In terms of domain architecture, ATP-grasp spans 108 to 316; that stretch reads REFMERNDIP…LVEIAEGIVK (209 aa). Residue 135-194 coordinates ATP; it reads IDEYGKPVVVKPLGLTGGKGVKVVGYQLKDNEEAKEYAEYLIKKDGKVLIEERTDGVEFT. Gln274, Glu286, and Asn288 together coordinate Mg(2+). 3 residues coordinate Mn(2+): Gln274, Glu286, and Asn288.

Belongs to the GARS family. Mg(2+) serves as cofactor. It depends on Mn(2+) as a cofactor.

The enzyme catalyses 5-phospho-beta-D-ribosylamine + glycine + ATP = N(1)-(5-phospho-beta-D-ribosyl)glycinamide + ADP + phosphate + H(+). Its pathway is purine metabolism; IMP biosynthesis via de novo pathway; N(1)-(5-phospho-D-ribosyl)glycinamide from 5-phospho-alpha-D-ribose 1-diphosphate: step 2/2. The protein is Phosphoribosylamine--glycine ligase of Pyrococcus abyssi (strain GE5 / Orsay).